A 152-amino-acid chain; its full sequence is Protein CHLOROPLAST VESICULATION (152 aa).

Residues 1-22 constitute a chloroplast transit peptide; that stretch reads MAGRISCCLNLPPLDSNSAQSL. The helical transmembrane segment at 48–65 threads the bilayer; sequence CSFVLGVAATVVIGGIQI. The segment at 92–152 is important for chloroplast destabilization and the formation of CV-containing vesicles; it reads RWSDKRTCPP…RVNRGGCFSV (61 aa).

Interacts with the photosystem II subunit PsbO1 via its C-terminal region in the chloroplast thylakoid membrane and in CV-containing vesicles (CCVs). Mostly expressed in senescent and mature leaves but not in young leaves.

Its subcellular location is the plastid. The protein localises to the chloroplast membrane. The protein resides in the chloroplast thylakoid membrane. It is found in the chloroplast envelope. It localises to the vacuole. Its subcellular location is the vesicle. Triggers stress-induced chloroplast degradation, independently of autophagy and senescence-associated vacuoles. After targeting to the chloroplast, triggers its destabilization and subsequent disassembly, inducing the formation of CV-containing vesicles (CCVs) carrying stromal proteins, envelope membrane proteins, and thylakoid membrane proteins which are released from the chloroplasts and mobilized to the vacuole for proteolysis. The protein is Protein CHLOROPLAST VESICULATION of Arabidopsis thaliana (Mouse-ear cress).